Consider the following 389-residue polypeptide: Succinyl-diaminopimelate desuccinylase (389 aa).

Histidine 75 contacts Zn(2+). Aspartate 77 is an active-site residue. Aspartate 108 provides a ligand contact to Zn(2+). Glutamate 142 functions as the Proton acceptor in the catalytic mechanism. Residues glutamate 143, glutamate 171, and histidine 357 each contribute to the Zn(2+) site.

The protein belongs to the peptidase M20A family. DapE subfamily. In terms of assembly, homodimer. Requires Zn(2+) as cofactor. It depends on Co(2+) as a cofactor.

It catalyses the reaction N-succinyl-(2S,6S)-2,6-diaminopimelate + H2O = (2S,6S)-2,6-diaminopimelate + succinate. Its pathway is amino-acid biosynthesis; L-lysine biosynthesis via DAP pathway; LL-2,6-diaminopimelate from (S)-tetrahydrodipicolinate (succinylase route): step 3/3. Functionally, catalyzes the hydrolysis of N-succinyl-L,L-diaminopimelic acid (SDAP), forming succinate and LL-2,6-diaminopimelate (DAP), an intermediate involved in the bacterial biosynthesis of lysine and meso-diaminopimelic acid, an essential component of bacterial cell walls. The protein is Succinyl-diaminopimelate desuccinylase of Paracidovorax citrulli (strain AAC00-1) (Acidovorax citrulli).